Consider the following 390-residue polypeptide: 4-hydroxycoumarin synthase 1 (390 aa).

Cys-161 is an active-site residue.

This sequence belongs to the thiolase-like superfamily. Chalcone/stilbene synthases family. Homodimer.

It catalyses the reaction 2-hydroxybenzoyl-CoA + malonyl-CoA = 4-hydroxycoumarin + CO2 + 2 CoA. Type III polyketide synthase involved preferentially in the biosynthesis of 4-hydroxycoumarin from salicoyl-CoA. Can also use benzoyl-CoA and malonyl-CoA to produce 3,5-dihydroxybiphenyl as a major product and benzoyldiacetic acid lactone as a minor side product. Can also use m-hydroxybenzoyl-CoA as substrate, producing m-hydroxybenzoyl diacetic acid lactone as a derailment product. No activity with p-hydroxybenzoyl-CoA, CoA-linked cinnamic acids or acetyl-CoA. In Sorbus aucuparia (European mountain ash), this protein is 4-hydroxycoumarin synthase 1 (BIS2).